Reading from the N-terminus, the 330-residue chain is B-cell receptor CD22 (330 aa).

An N-terminal signal peptide occupies residues 1-17 (MHLLGPWLLLLEYLAFS). An Ig-like V-type domain is found at 18–136 (DSSKWAFEHP…MERIHLNVSE (119 aa)). At 18–330 (DSSKWAFEHP…VFLQVQYAPE (313 aa)) the chain is on the extracellular side. 3 disulfide bridges follow: C37–C165, C42–C100, and C159–C217. 3 N-linked (GlcNAc...) asparagine glycosylation sites follow: N65, N99, and N110. Residue R118 participates in N-acetylneuraminate binding. N-linked (GlcNAc...) asparagine glycans are attached at residues N133, N162, N187, and N229. 2 consecutive Ig-like C2-type domains span residues 141–233 (PHIQ…DTVQ) and 240–324 (PKLK…VFLQ). C263 and C307 are joined by a disulfide.

The protein belongs to the immunoglobulin superfamily. SIGLEC (sialic acid binding Ig-like lectin) family. In terms of assembly, predominantly monomer of isoform CD22-beta. Also found as heterodimer of isoform CD22-beta and a shorter isoform. Interacts with PTPN6/SHP-1, LYN, SYK, PIK3R1/PIK3R2 and PLCG1 upon phosphorylation. Interacts with GRB2, INPP5D and SHC1 upon phosphorylation. May form a complex with INPP5D/SHIP, GRB2 and SHC1.

It localises to the cell membrane. Most highly expressed siglec (sialic acid-binding immunoglobulin-like lectin) on B-cells that plays a role in various aspects of B-cell biology including differentiation, antigen presentation, and trafficking to bone marrow. Binds to alpha 2,6-linked sialic acid residues of surface molecules such as CD22 itself, CD45 and IgM in a cis configuration. Can also bind to ligands on other cells as an adhesion molecule in a trans configuration. Acts as an inhibitory coreceptor on the surface of B-cells and inhibits B-cell receptor induced signaling, characterized by inhibition of the calcium mobilization and cellular activation. Mechanistically, the immunoreceptor tyrosine-based inhibitory motif domain is phosphorylated by the Src kinase LYN, which in turn leads to the recruitment of the protein tyrosine phosphatase 1/PTPN6, leading to the negative regulation of BCR signaling. If this negative signaling from is of sufficient strength, apoptosis of the B-cell can be induced. This Pongo pygmaeus (Bornean orangutan) protein is B-cell receptor CD22.